The following is a 94-amino-acid chain: Putative pterin-4-alpha-carbinolamine dehydratase (94 aa).

The protein belongs to the pterin-4-alpha-carbinolamine dehydratase family.

The catalysed reaction is (4aS,6R)-4a-hydroxy-L-erythro-5,6,7,8-tetrahydrobiopterin = (6R)-L-erythro-6,7-dihydrobiopterin + H2O. In Mycolicibacterium smegmatis (strain ATCC 700084 / mc(2)155) (Mycobacterium smegmatis), this protein is Putative pterin-4-alpha-carbinolamine dehydratase.